The sequence spans 313 residues: Pyrimidine-specific ribonucleoside hydrolase RihA (313 aa).

His-240 is an active-site residue.

This sequence belongs to the IUNH family. RihA subfamily.

In terms of biological role, hydrolyzes cytidine or uridine to ribose and cytosine or uracil, respectively. The chain is Pyrimidine-specific ribonucleoside hydrolase RihA from Enterobacter sp. (strain 638).